Consider the following 1769-residue polypeptide: Tight junction protein 1 (1769 aa).

Residues 23–110 form the PDZ 1 domain; it reads TVTLHRAPGF…NAKITIRRKK (88 aa). Basic residues predominate over residues 102–112; the sequence is AKITIRRKKKV. A disordered region spans residues 102-188; it reads AKITIRRKKK…QPPKPTKVTL (87 aa). Residues 123-135 show a composition bias toward acidic residues; sequence PVSENEDSYDEEV. Ser125 carries the post-translational modification Phosphoserine. The residue at position 131 (Tyr131) is a Phosphotyrosine. The segment covering 148 to 174 has biased composition (basic and acidic residues); the sequence is RRSEKSWARDRSASRERSLSPRSDRRS. Residues Ser174, Ser177, and Ser178 each carry the phosphoserine modification. Residue Thr184 is modified to Phosphothreonine. A PDZ 2 domain is found at 185-263; sequence KVTLVKSRKN…KLKMVVQRDE (79 aa). Residues Ser211 and Ser240 each carry the phosphoserine modification. At Thr266 the chain carries Phosphothreonine. Residues Ser274, Ser276, Ser279, Ser283, Ser289, Ser293, Ser296, Ser299, Ser322, Ser328, Ser333, Ser336, and Ser352 each carry the phosphoserine modification. A disordered region spans residues 295 to 362; that stretch reads ASDHSGRSHD…TPVKHADDHT (68 aa). A compositionally biased stretch (basic and acidic residues) spans 298 to 326; the sequence is HSGRSHDRPPRHSRSRSPDQRSEPSDHSR. At Thr353 the chain carries Phosphothreonine. A PDZ 3 domain is found at 420–501; the sequence is SMKLVKFRKG…GEEVTILAQK (82 aa). The 69-residue stretch at 515 to 583 folds into the SH3 domain; that stretch reads GDSFYIRTHF…PNKNRAEQLA (69 aa). The region spanning 609–790 is the Guanylate kinase-like domain; it reads SKRNLRKSRE…WYGALKEAIQ (182 aa). Phosphoserine is present on residues Ser616 and Ser621. The tract at residues 632-875 is occludin (OCLN)-binding region; sequence YERVVLREAG…GTPPESAITR (244 aa). Thr808 carries the phosphothreonine modification. Ser809 and Ser820 each carry phosphoserine. At Tyr821 the chain carries Phosphotyrosine. Residues Ser823, Ser827, and Ser836 each carry the phosphoserine modification. 2 disordered regions span residues 824 to 976 and 1010 to 1067; these read APGS…LRTP and EMMR…SYTD. Phosphothreonine is present on residues Thr845, Thr847, Thr853, Thr860, and Thr867. Residues 878-891 show a composition bias toward basic and acidic residues; sequence EPVREDSSGMHHEN. Low complexity predominate over residues 892 to 905; that stretch reads QTYPPYSPQAQPQP. Phosphoserine is present on Ser911. Polar residues-rich tracts occupy residues 933-952 and 962-976; these read PETN…TLTN and PSTS…LRTP. Phosphoserine is present on Ser967. Position 1070 is a phosphoserine (Ser1070). Disordered regions lie at residues 1091-1212, 1224-1261, and 1273-1589; these read SYYD…KAGH, PLIP…MKPQ, and KRSA…EFDS. The span at 1108–1124 shows a compositional bias: basic and acidic residues; sequence QHPRDLDSRQHPEESSE. Ser1138 bears the Phosphoserine mark. Phosphotyrosine occurs at positions 1139 and 1164. Positions 1150 to 1370 are actin-binding region (ABR); sequence RTSTLRHEEQ…FDRRSFENKP (221 aa). Over residues 1273-1286 the composition is skewed to basic and acidic residues; that stretch reads KRSASLENKKDENH. Residues 1300–1310 show a composition bias toward pro residues; the sequence is PGAPIIGPKPT. Over residues 1335 to 1346 the composition is skewed to basic and acidic residues; it reads PPEDIVRSNHYD. The residue at position 1353 (Tyr1353) is a Phosphotyrosine. Ser1365 bears the Phosphoserine mark. The segment covering 1387 to 1401 has biased composition (polar residues); it reads HSQNQTNFSSYSSKG. A compositionally biased stretch (basic and acidic residues) spans 1402–1419; the sequence is KSPEADAPDRSFGEKRYE. Ser1412 carries the phosphoserine modification. Composition is skewed to polar residues over residues 1460-1471 and 1514-1523; these read NSISLDFQNSLV and AEQTQKTVTP. Residues 1539-1548 show a composition bias toward basic and acidic residues; sequence PFERKFESPK. Phosphoserine occurs at positions 1546 and 1618. The 135-residue stretch at 1635 to 1769 folds into the ZU5 domain; the sequence is ATARGVFNNN…NCVSVLIDHF (135 aa).

This sequence belongs to the MAGUK family. In terms of assembly, homodimer. Forms heterodimers TJP3. Forms a heterodimer (via PDZ2 domain) with TJP2/ZO2 (via PDZ2 domain). Interacts with OCLN. Interacts with CALM, claudins, CGN/cingulin, CXADR, GJA12, GJD3 and UBN1. Interacts (via ZU5 domain) with CDC42BPB and MYZAP. Interacts (via PDZ domain) with GJA1. Interacts (via PDZ domains) with ANKRD2. Interacts with POPDC1 (via the C-terminus cytoplasmic tail). Interacts with HSPA4. Interacts with KIRREL1. Interacts with DLL1. Interacts with USP53 (via the C-terminal region). Interacts with DNMBP (via C-terminal domain); required for the apical cell-cell junction localization of DNMBP. Interacts with SPEF1. Interacts (via N-terminus) with CTNNA1. Interacts with CLDN18. Interacts with CLDN16 (via TRV motif); this is a prerequisite for anchoring of CLDN16 at the tight junction. Interacts with PKP1; the interaction facilitates TJP1/ZO-1 localization to the plasma membrane. Interacts with PATJ (via PDZ1-6 domains); the interaction is required for attachment and extension of TJP1/ZO1 condensates along the apical cell interface. Post-translationally, phosphorylated at tyrosine redidues in response to epidermal growth factor (EGF). This response is dependent on an intact actin microfilament system. Dephosphorylated by PTPRJ.

The protein localises to the cell membrane. It localises to the cell junction. The protein resides in the tight junction. It is found in the gap junction. Functionally, TJP1, TJP2, and TJP3 are closely related scaffolding proteins that link tight junction (TJ) transmembrane proteins such as claudins, junctional adhesion molecules, and occludin to the actin cytoskeleton. Forms a multistranded TJP1/ZO1 condensate which elongates to form a tight junction belt, the belt is anchored at the apical cell membrane via interaction with PATJ. The tight junction acts to limit movement of substances through the paracellular space and as a boundary between the compositionally distinct apical and basolateral plasma membrane domains of epithelial and endothelial cells. Necessary for lumenogenesis, and particularly efficient epithelial polarization and barrier formation. Plays a role in the regulation of cell migration by targeting CDC42BPBb to the leading edge of migrating cells. With TJP2 and TJP3, participates in the junctional retention and stability of the transcription factor DBPA, but is not involved in its shuttling to the nucleus. May play a role in mediating cell morphology changes during ameloblast differentiation via its role in tight junctions. This Canis lupus familiaris (Dog) protein is Tight junction protein 1.